Consider the following 106-residue polypeptide: MARSLCFMAFAVLAMMLFVAYEVQAKSTCKAESNTFPGLCITKPPCRKACLSEKFTDGKCSKILRRCICYKPCVFDGKMIQTGAENLAEEAETLAAALLEEEMMDN.

The first 25 residues, 1 to 25, serve as a signal peptide directing secretion; the sequence is MARSLCFMAFAVLAMMLFVAYEVQA. 4 disulfide bridges follow: cysteine 29/cysteine 73, cysteine 40/cysteine 60, cysteine 46/cysteine 67, and cysteine 50/cysteine 69.

Belongs to the DEFL family.

It localises to the secreted. Its subcellular location is the vacuole. The protein is Defensin-like protein 1 (THIO1) of Nicotiana paniculata.